The sequence spans 278 residues: SLAM family member 8 (278 aa).

A signal peptide spans 1–20 (MWSLWSLLLFEALLPVVVVS). Topologically, residues 21–231 (VQVLSKVGDS…AASGKASYKD (211 aa)) are extracellular. N83 and N154 each carry an N-linked (GlcNAc...) asparagine glycan. The region spanning 126–213 (PEVQVFTAAA…PVSWDMTTVT (88 aa)) is the Ig-like C2-type domain. Residues C150 and C199 are joined by a disulfide bond. A helical transmembrane segment spans residues 232 to 252 (VLLVVVPITLFLILAGLFGAW). The Cytoplasmic portion of the chain corresponds to 253–278 (HHGLCSGKKKDACTDGVLPETENALV).

The protein resides in the membrane. May play a role in B-lineage commitment and/or modulation of signaling through the B-cell receptor. The chain is SLAM family member 8 (Slamf8) from Mus musculus (Mouse).